Reading from the N-terminus, the 303-residue chain is Acetaldehyde dehydrogenase (303 aa).

Residue 13–16 (SGNI) participates in NAD(+) binding. Cysteine 128 functions as the Acyl-thioester intermediate in the catalytic mechanism. NAD(+) contacts are provided by residues 159-167 (SAGPGTRQN) and asparagine 278.

Belongs to the acetaldehyde dehydrogenase family.

The catalysed reaction is acetaldehyde + NAD(+) + CoA = acetyl-CoA + NADH + H(+). This chain is Acetaldehyde dehydrogenase, found in Chloroflexus aggregans (strain MD-66 / DSM 9485).